The primary structure comprises 584 residues: Transcription factor 7-like 1 (584 aa).

Over residues 1–28 (MPQLGGGRGGAGGGGGGSGAGATSGGDD) the composition is skewed to gly residues. The CTNNB1-binding stretch occupies residues 1–71 (MPQLGGGRGG…VKSSLVNESE (71 aa)). Disordered stretches follow at residues 1–99 (MPQL…RDYF), 159–179 (ATVK…VPVV), and 194–231 (YSND…SPYY). Residues 64-78 (SSLVNESENQSSSSD) show a composition bias toward low complexity. Residues 80-99 (EAERRPQPARDAFQKPRDYF) show a composition bias toward basic and acidic residues. The segment at residues 342 to 410 (VKKPLNAFML…LHAQLYPTWS (69 aa)) is a DNA-binding region (HMG box). The segment at 412–501 (RDNYGKKKKR…HSEQAQPLSL (90 aa)) is disordered. Residues 417–423 (KKKKRKR) carry the Nuclear localization signal motif. 2 stretches are compositionally biased toward low complexity: residues 427-437 (LSQTQSQQQIQ) and 470-491 (SALD…PAAT). Polar residues predominate over residues 492–501 (HSEQAQPLSL).

Belongs to the TCF/LEF family. In terms of assembly, binds the armadillo repeat of CTNNB1 and forms a stable complex. Interacts with DAZAP2. Detected in the basal layer of epidermis and in outer root sheath and bulge of hair follicles.

It localises to the nucleus. In terms of biological role, participates in the Wnt signaling pathway. Binds to DNA and acts as a repressor in the absence of CTNNB1, and as an activator in its presence. Necessary for the terminal differentiation of epidermal cells, the formation of keratohyalin granules and the development of the barrier function of the epidermis. The sequence is that of Transcription factor 7-like 1 (Tcf7l1) from Mus musculus (Mouse).